The following is a 102-amino-acid chain: Malonate decarboxylase acyl carrier protein (102 aa).

Serine 27 carries the O-(phosphoribosyl dephospho-coenzyme A)serine modification.

The protein belongs to the MdcC family. Post-translationally, covalently binds the prosthetic group of malonate decarboxylase.

It is found in the cytoplasm. Its function is as follows. Subunit of malonate decarboxylase, it is an acyl carrier protein to which acetyl and malonyl thioester residues are bound via a 2'-(5''-phosphoribosyl)-3'-dephospho-CoA prosthetic group and turn over during the catalytic mechanism. The sequence is that of Malonate decarboxylase acyl carrier protein from Acinetobacter calcoaceticus.